The primary structure comprises 691 residues: Elongation factor G (691 aa).

The region spanning 8-282 (EKTRNIGIMA…AVVDYLPSPV (275 aa)) is the tr-type G domain. Residues 17–24 (AHIDAGKT), 81–85 (DTPGH), and 135–138 (NKMD) each bind GTP.

It belongs to the TRAFAC class translation factor GTPase superfamily. Classic translation factor GTPase family. EF-G/EF-2 subfamily.

It is found in the cytoplasm. Catalyzes the GTP-dependent ribosomal translocation step during translation elongation. During this step, the ribosome changes from the pre-translocational (PRE) to the post-translocational (POST) state as the newly formed A-site-bound peptidyl-tRNA and P-site-bound deacylated tRNA move to the P and E sites, respectively. Catalyzes the coordinated movement of the two tRNA molecules, the mRNA and conformational changes in the ribosome. In Caldicellulosiruptor bescii (strain ATCC BAA-1888 / DSM 6725 / KCTC 15123 / Z-1320) (Anaerocellum thermophilum), this protein is Elongation factor G.